The chain runs to 263 residues: Protein phosphatase type 2A regulatory subunit RTS3 (263 aa).

2 disordered regions span residues 1-62 (MIAT…AQRR) and 149-176 (LPLT…ISNG). The segment covering 46-61 (LSTSSSPSSSPMSAQR) has biased composition (low complexity). A phosphoserine mark is found at Ser172, Ser192, Ser214, and Ser238.

It localises to the cytoplasm. Its subcellular location is the nucleus. In terms of biological role, may be a component of a protein phosphatase type 2A (PP2A) complex. Negatively regulates SIT4 phosphatase, a modulators of caffeine sensitivity. The chain is Protein phosphatase type 2A regulatory subunit RTS3 (RTS3) from Saccharomyces cerevisiae (strain ATCC 204508 / S288c) (Baker's yeast).